A 165-amino-acid chain; its full sequence is S-ribosylhomocysteine lyase (165 aa).

Fe cation-binding residues include His54, His58, and Cys128.

It belongs to the LuxS family. Homodimer. Fe cation is required as a cofactor.

It catalyses the reaction S-(5-deoxy-D-ribos-5-yl)-L-homocysteine = (S)-4,5-dihydroxypentane-2,3-dione + L-homocysteine. Functionally, involved in the synthesis of autoinducer 2 (AI-2) which is secreted by bacteria and is used to communicate both the cell density and the metabolic potential of the environment. The regulation of gene expression in response to changes in cell density is called quorum sensing. Catalyzes the transformation of S-ribosylhomocysteine (RHC) to homocysteine (HC) and 4,5-dihydroxy-2,3-pentadione (DPD). The polypeptide is S-ribosylhomocysteine lyase (Helicobacter hepaticus (strain ATCC 51449 / 3B1)).